The sequence spans 397 residues: MKIAYFDCAAGIAGDMCLGALLDCGVPLEYLNRQLQALGIEGEYGLQVSRVQRCGQPALQAVVEVLGSQSGGSLARHWAEIQALIAGSQLSPAIKARSLAVFEKLAQAEAKVHQMPVEEVHFHEVGAVDALVDIVGTCIGLDWLQVERVLSSPHPVGGGWVSTEHGKLAVPVPAVIELWEMGRVPVFSNGVEAELVTPTGAALAVALAEEFGPCPPMRVEKVGRGAGAQELPIPNVFRLWIGEANGGELTETVSVLQTQIDDLNPQVIAYTCEQLLALGAWDVFTQPITMKQGRPGILLTVICPPDRVPECQDLIFRETTTLGIRHFQQQRTLLERVVERVETPYGLVDIKVARHHGRIVNAQPEFRDCVARAQEFHVPVQTVWLAAQSAWQNRLQG.

Belongs to the LarC family.

The chain is Putative nickel insertion protein from Synechococcus sp. (strain JA-2-3B'a(2-13)) (Cyanobacteria bacterium Yellowstone B-Prime).